Consider the following 241-residue polypeptide: Small ribosomal subunit protein uS2 (241 aa).

The protein belongs to the universal ribosomal protein uS2 family.

In Salmonella agona (strain SL483), this protein is Small ribosomal subunit protein uS2.